The primary structure comprises 59 residues: uncharacterized protein (59 aa).

2 consecutive transmembrane segments (helical) span residues 1 to 21 (MNMYWFLGALLYFLIGTYIFI) and 30 to 50 (GSWILLALAAPLIIAGYPYFY).

The protein localises to the cell membrane. This is an uncharacterized protein from Bacillus subtilis (strain 168).